The primary structure comprises 316 residues: MSSQKQLEGMIFDVQSFSVHDGPGCRTTVFLNGCPLSCKWCANPESWTVRPHMMFSELSCQYENGCTVCHGKCKNGALSFNLDNKPVIDWNICKDCESFECVNSCYYNAFKLCAKPYTVDELVQVIKRDSNNWRSNGGVTFSGGEPLLQHEFLHEVLLKCHEVNIHTAIETSACVSNEVFNKIFKDIDFAFIDIKHMDREKHKEQTGVYNDLILENISNLANSDWNGRLVLRVPVISGFNDSAENISDIISFMHKNNLIEINLLPFHRLGESKWIQLGKEYEYSDKGDIDEEHLEELQDIFLDNGIACYVGHETAF.

The region spanning 20–307 (HDGPGCRTTV…QDIFLDNGIA (288 aa)) is the Radical SAM core domain. [4Fe-4S] cluster contacts are provided by Cys-34, Cys-38, Cys-41, Cys-60, Cys-66, Cys-69, and Cys-105. 40-42 (WCA) contributes to the S-adenosyl-L-methionine binding site. Positions 84–115 (NKPVIDWNICKDCESFECVNSCYYNAFKLCAK) constitute a 4Fe-4S ferredoxin-type domain. S-adenosyl-L-methionine contacts are provided by residues Gly-144, 193-195 (DIK), and His-267.

It belongs to the organic radical-activating enzymes family. Monomer. It depends on [4Fe-4S] cluster as a cofactor.

It carries out the reaction glycyl-[protein] + reduced [flavodoxin] + S-adenosyl-L-methionine = glycin-2-yl radical-[protein] + semiquinone [flavodoxin] + 5'-deoxyadenosine + L-methionine + H(+). Its function is as follows. Catalyzes activation of 4-hydroxyphenylacetate decarboxylase under anaerobic conditions by generation of an organic free radical on a glycine residue, via a homolytic cleavage of S-adenosyl-L-methionine (SAM). This Clostridioides difficile (strain CD196) (Peptoclostridium difficile) protein is 4-hydroxyphenylacetate decarboxylase activating enzyme.